Consider the following 309-residue polypeptide: Protein FdhE homolog (309 aa).

The protein belongs to the FdhE family.

The protein localises to the cytoplasm. Functionally, necessary for formate dehydrogenase activity. The sequence is that of Protein FdhE homolog from Cronobacter sakazakii (strain ATCC BAA-894) (Enterobacter sakazakii).